We begin with the raw amino-acid sequence, 135 residues long: Transcriptional activator protein (135 aa).

The Nuclear localization signal signature appears at Lys17–Arg32. A zinc finger spans residues Cys37–His54. The segment at Ala82 to Gln102 is disordered. Residues Ala120–Phe135 form a transactivation region.

Belongs to the geminiviridae transcriptional activator protein family. Monomer. Homodimer. Homooligomer. Self-interaction correlates with nuclear localization and efficient activation of transcription. Monomers suppress local silencing by interacting with and inactivating host adenosine kinase 2 (ADK2) in the cytoplasm. Interacts with and inhibits host SNF1 kinase. Binds to ssDNA. Post-translationally, phosphorylated.

The protein localises to the host nucleus. It localises to the host cytoplasm. Functionally, strong activator of the late viral genes promoters. Enhances the expression of the capsid protein and nuclear shuttle protein. Acts as a suppressor of RNA-mediated gene silencing, also known as post-transcriptional gene silencing (PTGS), a mechanism of plant viral defense that limits the accumulation of viral RNAs. Suppresses the host RNA silencing by inhibiting adenosine kinase 2 (ADK2), a kinase involved in a general methylation pathway. Also suppresses the host basal defense by interacting with and inhibiting SNF1 kinase, a key regulator of cell metabolism implicated in innate antiviral defense. Determines pathogenicity. In Mungbean yellow mosaic virus (strain Vigna) (MYMV), this protein is Transcriptional activator protein.